Reading from the N-terminus, the 25-residue chain is Spinigerin (25 aa).

The protein resides in the secreted. Functionally, active against Gram-positive bacteria B.megaterium and M.luteus, Gram-negative bacteria E.coli SBS363 and D22, K.pneumoniae, S.typhimurium and P.aeruginosa, yeast C.albicans and filamentous fungi F.culmorum, N.crassa, N.hematococca and T.viridae. Inactive against Gram-positive bacteria B.subtilis, S.pyogenes, B.thuringiensis and S.aureus, Gram-negative bacteria E.cloacae and E.carotovora and filamentous fungus B.bassiana. The sequence is that of Spinigerin from Pseudacanthotermes spiniger.